Reading from the N-terminus, the 176-residue chain is Pituitary adenylate cyclase-activating polypeptide (176 aa).

The first 24 residues, 1–24, serve as a signal peptide directing secretion; that stretch reads MTMCSGARLALLVYGILMHSSVYG. The propeptide occupies 25–80; the sequence is SPAASGLRFPGIRPENEVYDEDGNPQQDFYDSESLGVGSPASALRDAYALYYPAEE. The interval 98–135 is disordered; it reads QPSARRSPADAHGQGLGWDPGGSADDDSEPLSKRHSDG. The segment at 150 to 158 is important for receptor binding; it reads VKKYLAAVL. Leu158 carries the leucine amide modification. Residue Lys169 is modified to Lysine amide. A propeptide spanning residues 173–176 is cleaved from the precursor; it reads IPYL.

Belongs to the glucagon family. As to quaternary structure, interacts with ADCYAP1R1 (via N-terminal extracellular domain); both PACAP27 and PACAP38 neuropeptides function as ligand for the ADCYAP1R1 receptor, which modulates the activity of downstream effectors. Interacts with VIPR1 and VIPR2; functions as ligand for VIPR1 and VIPR2 receptors, which modulate the activity of downstream effectors.

The protein localises to the secreted. Its function is as follows. PACAP is a neuropeptide involved in diverse array of physiological processes through activating the PACAP subfamily of class B1 G protein-coupled receptors: VIP receptor 1 (VIPR1), VIP receptor 2 (VIPR2), and PACAP type I receptor (ADCYAP1R1). Exerts neuroprotective and general cytoprotective effects due to anti-apoptotic, anti-inflammatory, and antioxidant actions. Promotes neuron projection development through the RAPGEF2/Rap1/B-Raf/ERK pathway. In chromaffin cells, induces long-lasting increase of intracellular calcium concentrations and neuroendocrine secretion. Involved in the control of glucose homeostasis, induces insulin secretion by pancreatic beta cells. PACAP exists in two bioactive forms from proteolysis of the same precursor protein, PACAP27 and PACAP38, which differ by eleven amino acid residues in the C-terminus. This Bos taurus (Bovine) protein is Pituitary adenylate cyclase-activating polypeptide (ADCYAP1).